Consider the following 404-residue polypeptide: Latent membrane protein 1 (404 aa).

Topologically, residues 1–23 are cytoplasmic; it reads MERDLESAPPSAPRPPLGPPLSS. Residues 24–44 traverse the membrane as a helical segment; the sequence is SIGLALLLLLLALLFWLYIVM. The Extracellular portion of the chain corresponds to 45-51; the sequence is SDWTGGA. A helical membrane pass occupies residues 52–72; it reads LLVLYSFALMLIIIILIIFIF. At 73-75 the chain is on the cytoplasmic side; sequence RRD. A helical transmembrane segment spans residues 76–96; sequence LLCPLGGLGLLLLMITLLLIA. The Extracellular portion of the chain corresponds to 97 to 106; the sequence is LWNLHGQALY. A helical transmembrane segment spans residues 107–127; it reads LGIVLFIFGCLLVFGIWIYFL. Residues 128 to 139 are Cytoplasmic-facing; the sequence is EILWRLGATLWQ. Residues 140–160 form a helical membrane-spanning segment; the sequence is LLAFILAFFLAIILLIIALYL. The Extracellular portion of the chain corresponds to 161–163; sequence QQN. Residues 164-184 form a helical membrane-spanning segment; sequence WWTLLVDLLWLLLFMAILIWM. Over 185 to 404 the chain is Cytoplasmic; the sequence is YYHGPRHTDE…HGPVQLSYYD (220 aa). A CTAR1 region spans residues 194-232; sequence EHHHDDSLPHPQQATDDSSHESDSNSNEGRHHLLVSGAG. The disordered stretch occupies residues 194–404; it reads EHHHDDSLPH…HGPVQLSYYD (211 aa). The short motif at 204-208 is the Interaction with host TRAF proteins element; sequence PQQAT. A compositionally biased stretch (basic and acidic residues) spans 210–224; it reads DSSHESDSNSNEGRH. Low complexity-rich tracts occupy residues 251-322 and 375-384; these read NGPQ…PQDP and PHLPTLLLGT. The CTAR2 stretch occupies residues 370-404; that stretch reads GGGGDPHLPTLLLGTSGSGGDDDDPHGPVQLSYYD.

It belongs to the herpesviridae LMP-1 family. Interacts (via PXQXT motif) with host tumor necrosis factor receptor-associated factor (TRAF) proteins TRAF1, TRAF2, TRAF3 and TRAF5. Interacts with human protein ZMYND11; leading to negatively regulate NF-kappa-B activation. Interacts with host UBE2I; this interaction induces the sumoylation of various cellular proteins. Interacts with host IRF7. Interacts with host TYK2. In terms of processing, ubiquitinated on the N-terminus.

The protein localises to the host cell membrane. Functionally, acts as a CD40 functional homolog to prevent apoptosis of infected B-lymphocytes and drive their proliferation. Functions as a constitutively active tumor necrosis factor receptor that induces the activation of several signaling pathways, including those of the NF-kappa-B family. LMP1 signaling leads to up-regulation of antiapoptotic proteins and provide growth signals in latently infected cells. Interacts with host UBE2I and subsequently affects the sumoylation state of several cellular proteins. For example, induces the sumoylation of host IRF7 thereby limiting its transcriptional activity and modulating the activation of innate immune responses. Also inhibits host IFN-alpha-stimulated STAT2 nuclear translocation and interferon-stimulated response element transcriptional activity by interacting with and inhibiting host TYK2. Induces SUMO expression during viral latency thereby dysregulating the host sumoylation processes. This chain is Latent membrane protein 1 (LMP1), found in Homo sapiens (Human).